The primary structure comprises 219 residues: Large ribosomal subunit protein uL16 (219 aa).

This sequence belongs to the universal ribosomal protein uL16 family. In terms of assembly, component of the small ribosomal subunit. Mature ribosomes consist of a small (40S) and a large (60S) subunit. The 40S subunit contains about 33 different proteins and 1 molecule of RNA (18S). The 60S subunit contains about 49 different proteins and 3 molecules of RNA (25S, 5.8S and 5S).

The protein is Large ribosomal subunit protein uL16 (RPL10) of Encephalitozoon cuniculi (strain GB-M1) (Microsporidian parasite).